We begin with the raw amino-acid sequence, 271 residues long: Putative phosphoenolpyruvate synthase regulatory protein (271 aa).

Glycine 151–threonine 158 provides a ligand contact to ADP.

This sequence belongs to the pyruvate, phosphate/water dikinase regulatory protein family. PSRP subfamily.

The enzyme catalyses [pyruvate, water dikinase] + ADP = [pyruvate, water dikinase]-phosphate + AMP + H(+). The catalysed reaction is [pyruvate, water dikinase]-phosphate + phosphate + H(+) = [pyruvate, water dikinase] + diphosphate. Bifunctional serine/threonine kinase and phosphorylase involved in the regulation of the phosphoenolpyruvate synthase (PEPS) by catalyzing its phosphorylation/dephosphorylation. The chain is Putative phosphoenolpyruvate synthase regulatory protein from Burkholderia orbicola (strain MC0-3).